The chain runs to 206 residues: Small ribosomal subunit protein uS4 (206 aa).

Residues 96 to 156 (GRLDNVVYRM…EKSKKQSRIK (61 aa)) enclose the S4 RNA-binding domain.

Belongs to the universal ribosomal protein uS4 family. Part of the 30S ribosomal subunit. Contacts protein S5. The interaction surface between S4 and S5 is involved in control of translational fidelity.

One of the primary rRNA binding proteins, it binds directly to 16S rRNA where it nucleates assembly of the body of the 30S subunit. Functionally, with S5 and S12 plays an important role in translational accuracy. The polypeptide is Small ribosomal subunit protein uS4 (Photorhabdus laumondii subsp. laumondii (strain DSM 15139 / CIP 105565 / TT01) (Photorhabdus luminescens subsp. laumondii)).